The chain runs to 467 residues: Cruzipain (467 aa).

An N-terminal signal peptide occupies residues 1-18 (MSGWARALLLAAVLVVMA). The propeptide at 19-122 (CLVPAATASL…RVPVKVEVVG (104 aa)) is activation peptide. Disulfide bonds link cysteine 144-cysteine 185, cysteine 178-cysteine 223, and cysteine 277-cysteine 325. The active site involves cysteine 147. Asparagine 169 carries N-linked (GlcNAc...) asparagine glycosylation. The active site involves histidine 284. Asparagine 292 is a glycosylation site (N-linked (GlcNAc...) asparagine). Asparagine 304 is an active-site residue. A disordered region spans residues 333–355 (SAVVGGPGPTPEPTTTTTTSAPG). Over residues 345 to 354 (PTTTTTTSAP) the composition is skewed to low complexity. Residue asparagine 377 is glycosylated (N-linked (GlcNAc...) asparagine).

Belongs to the peptidase C1 family.

It catalyses the reaction Broad endopeptidase specificity similar to that of cathepsin L.. Its activity is regulated as follows. Strongly inhibited by E-64 (L-trans-epoxysuccinylleucylamido(4-guanidino)butane), Leupeptin, and N-alpha-p-tosyl-L-lysine chloromethyl ketone. Functionally, hydrolyzes chromogenic peptides at the carboxyl Arg or Lys; requires at least one more amino acid, preferably Arg, Phe, Val or Leu, between the terminal Arg or Lys and the amino-blocking group. The cysteine protease may play an important role in the development and differentiation of the parasites at several stages of their life cycle. In Trypanosoma cruzi, this protein is Cruzipain.